Consider the following 315-residue polypeptide: Ribosomal RNA small subunit methyltransferase H (315 aa).

S-adenosyl-L-methionine contacts are provided by residues 37 to 39 (GGH), aspartate 57, leucine 91, aspartate 105, and glutamine 112.

It belongs to the methyltransferase superfamily. RsmH family.

The protein localises to the cytoplasm. It carries out the reaction cytidine(1402) in 16S rRNA + S-adenosyl-L-methionine = N(4)-methylcytidine(1402) in 16S rRNA + S-adenosyl-L-homocysteine + H(+). Specifically methylates the N4 position of cytidine in position 1402 (C1402) of 16S rRNA. The sequence is that of Ribosomal RNA small subunit methyltransferase H from Syntrophus aciditrophicus (strain SB).